A 226-amino-acid chain; its full sequence is EEF1A lysine methyltransferase 3 (226 aa).

Residues Trp-57, 83-85, Asp-104, Trp-133, and Ala-150 each bind S-adenosyl-L-methionine; that span reads GAG.

It belongs to the methyltransferase superfamily. METTL21 family. As to quaternary structure, interacts with members of the heat shock protein 70 and 90 families and of the TCP-1 chaperonin family, as well as with HSPD1, STIP1 and tubulin; at least some of these proteins may be methylation substrates.

It localises to the cytoplasm. Its subcellular location is the cytoskeleton. The protein localises to the microtubule organizing center. It is found in the centrosome. The catalysed reaction is L-lysyl-[protein] + 3 S-adenosyl-L-methionine = N(6),N(6),N(6)-trimethyl-L-lysyl-[protein] + 3 S-adenosyl-L-homocysteine + 3 H(+). It catalyses the reaction L-lysyl-[protein] + S-adenosyl-L-methionine = N(6)-methyl-L-lysyl-[protein] + S-adenosyl-L-homocysteine + H(+). The enzyme catalyses N(6)-methyl-L-lysyl-[protein] + S-adenosyl-L-methionine = N(6),N(6)-dimethyl-L-lysyl-[protein] + S-adenosyl-L-homocysteine + H(+). It carries out the reaction N(6),N(6)-dimethyl-L-lysyl-[protein] + S-adenosyl-L-methionine = N(6),N(6),N(6)-trimethyl-L-lysyl-[protein] + S-adenosyl-L-homocysteine + H(+). Protein-lysine methyltransferase that selectively mono-, di- and trimethylates 'Lys-165' of the translation elongation factors EEF1A1 and EEF1A2 in an aminoacyl-tRNA and GTP-dependent manner. EEF1A1 methylation by EEF1AKMT3 is dynamic as well as inducible by stress conditions, such as ER-stress, and plays a regulatory role on mRNA translation. The sequence is that of EEF1A lysine methyltransferase 3 from Bos taurus (Bovine).